We begin with the raw amino-acid sequence, 414 residues long: Histidine--tRNA ligase (414 aa).

This sequence belongs to the class-II aminoacyl-tRNA synthetase family. In terms of assembly, homodimer.

Its subcellular location is the cytoplasm. It carries out the reaction tRNA(His) + L-histidine + ATP = L-histidyl-tRNA(His) + AMP + diphosphate + H(+). The sequence is that of Histidine--tRNA ligase from Rickettsia africae (strain ESF-5).